We begin with the raw amino-acid sequence, 98 residues long: UPF0235 protein Ping_3043 (98 aa).

The protein belongs to the UPF0235 family.

The polypeptide is UPF0235 protein Ping_3043 (Psychromonas ingrahamii (strain DSM 17664 / CCUG 51855 / 37)).